A 216-amino-acid polypeptide reads, in one-letter code: Probable nicotinate-nucleotide adenylyltransferase (216 aa).

Belongs to the NadD family.

It carries out the reaction nicotinate beta-D-ribonucleotide + ATP + H(+) = deamido-NAD(+) + diphosphate. The protein operates within cofactor biosynthesis; NAD(+) biosynthesis; deamido-NAD(+) from nicotinate D-ribonucleotide: step 1/1. Its function is as follows. Catalyzes the reversible adenylation of nicotinate mononucleotide (NaMN) to nicotinic acid adenine dinucleotide (NaAD). This is Probable nicotinate-nucleotide adenylyltransferase from Shewanella baltica (strain OS195).